The following is a 672-amino-acid chain: Forkhead box protein O3 (672 aa).

Disordered stretches follow at residues 1–85 (MAEA…GVSS) and 110–152 (GPAS…CSSR). Ser-30 carries the post-translational modification Phosphoserine. Thr-32 carries the phosphothreonine modification. Lys-46 is modified (N6-methyllysine). A compositionally biased stretch (acidic residues) spans 57–68 (IPEEDDDEDDED). Residues 80–108 (GGGVSSTLGSGLLLEDSAMLLAPGGQDLG) are required for mitochondrial import. Residues 110-129 (GPASAAGALSGGTPTQLQPQ) are compositionally biased toward low complexity. Lys-148 is modified (N6-methyllysine). The fork-head DNA-binding region spans 156 to 250 (WGNLSYADLI…KSGKAPRRRA (95 aa)). Residue Thr-178 is modified to Phosphothreonine. Ser-208 and Ser-214 each carry phosphoserine. Position 229 is an N6-methyllysine (Lys-229). The disordered stretch occupies residues 230–301 (SSWWIINPDG…GSPTSRSSDE (72 aa)). At Lys-241 the chain carries N6-acetyllysine. The Nuclear localization signal motif lies at 241–258 (KSGKAPRRRAVSMDNSNK). Ser-252 carries the phosphoserine modification. Residues 260 to 271 (TKSRGRAAKKKA) are compositionally biased toward basic residues. Residues Lys-261 and Lys-270 each carry the N6-methyllysine modification. A phosphoserine mark is found at Ser-279 and Ser-283. Residues 282-297 (DSPSQLSKWPGSPTSR) are compositionally biased toward polar residues. At Lys-289 the chain carries N6-methyllysine. Ser-293 carries the post-translational modification Phosphoserine. Ser-298 carries the post-translational modification Phosphoserine; by CaMK2A. Positions 299–672 (SDELDAWTDF…QASSQSWVPG (374 aa)) are mediates interaction with CHUK/IKKA and IKBKB/IKKB. Phosphoserine is present on Ser-310. A Phosphoserine; by SGK1 modification is found at Ser-314. A phosphoserine; by AMPK mark is found at Ser-398 and Ser-412. Disordered stretches follow at residues 399-441 (QPSP…SLNS) and 535-583 (HQHQ…QTLS). Polar residues-rich tracts occupy residues 409-441 (RGSSFPYTAKSSGLGSPTGSFNSTVFGPSSLNS) and 548-577 (ALSNSVSNMGLSDSSSLGSAKHQQQSPASQ). Lys-418 bears the N6-methyllysine mark. At Ser-420 the chain carries Phosphoserine. Ser-550 carries the post-translational modification Phosphoserine; by MAPKAPK5. Ser-554 is modified (phosphoserine; by AMPK and MAPKAPK5). Ser-587 and Ser-625 each carry phosphoserine; by AMPK. Phosphoserine; by IKKB is present on Ser-643.

Upon metabolic stress, forms a complex composed of FOXO3, SIRT3 and mitochondrial RNA polymerase POLRMT; the complex is recruited to mtDNA in a SIRT3-dependent manner. Also forms a complex composed of FOXO3, SIRT3, TFAM and POLRMT. Interacts with SIRT2; the interaction occurs independently of SIRT2 deacetylase activity. Interacts with YWHAB/14-3-3-beta and YWHAZ/14-3-3-zeta, which are required for cytosolic sequestration. Upon oxidative stress, interacts with STK4/MST1, which disrupts interaction with YWHAB/14-3-3-beta and leads to nuclear translocation. Interacts with PIM1. Interacts with DDIT3/CHOP. Interacts (deacetylated form) with SKP2. Interacts with CHUK and IKBKB. Interacts with CAMK2A, CAMK2B and calcineurin A. Interacts with NUPR1; this interaction represses FOXO3 transactivation. In terms of processing, deacetylation by SIRT1 or SIRT2 stimulates interaction of FOXO3 with SKP2 and facilitates SCF(SKP2)-mediated FOXO3 ubiquitination and proteasomal degradation. Deacetylation by SIRT2 stimulates FOXO3-mediated transcriptional activity in response to oxidative stress. Deacetylated by SIRT3. Deacetylation by SIRT3 stimulates FOXO3-mediated mtDNA transcriptional activity in response to metabolic stress. In the presence of survival factors such as IGF1, phosphorylated on Thr-32 and Ser-252 by AKT1/PKB. This phosphorylated form then interacts with 14-3-3 proteins and is retained in the cytoplasm. Survival factor withdrawal induces dephosphorylation and promotes translocation to the nucleus where the dephosphorylated protein induces transcription of target genes and triggers apoptosis. Although AKT1/PKB doesn't appear to phosphorylate Ser-314 directly, it may activate other kinases that trigger phosphorylation at this residue. Phosphorylated by STK4/MST1 on Ser-208 upon oxidative stress, which leads to dissociation from YWHAB/14-3-3-beta and nuclear translocation. Phosphorylated by PIM1. Phosphorylation by AMPK leads to the activation of transcriptional activity without affecting subcellular localization. Phosphorylated by AMPK on Ser-30 in response to metabolic stress which mediates FOXO3 mitochondrial translocation. Phosphorylation by MAPKAPK5 promotes nuclear localization and DNA-binding, leading to induction of miR-34b and miR-34c expression, 2 post-transcriptional regulators of MYC that bind to the 3'UTR of MYC transcript and prevent its translation. Phosphorylated by CHUK/IKKA and IKBKB/IKKB. TNF-induced inactivation of FOXO3 requires its phosphorylation at Ser-643 by IKBKB/IKKB which promotes FOXO3 retention in the cytoplasm, polyubiquitination and ubiquitin-mediated proteasomal degradation. May be dephosphorylated by calcineurin A on Ser-298 which abolishes FOXO3 transcriptional activity. Phosphorylation at Ser-252 promotes its degradation by the proteasome. Dephosphorylation at Ser-252 by protein phosphatase 2A (PPP2CA) promotes its stabilization; interaction with PPP2CA is enhanced by AMBRA1. Post-translationally, heavily methylated by SET9 which decreases stability, while moderately increasing transcriptional activity. The main methylation site is Lys-270. Methylation doesn't affect subcellular location. In terms of processing, polyubiquitinated. Ubiquitinated by a SCF complex containing SKP2, leading to proteasomal degradation. The N-terminus is cleaved following import into the mitochondrion. In terms of tissue distribution, expressed in white and brown adipose tissues (at protein level). Expressed in liver, kidney, lung and colon (at protein level). Expressed in skeletal muscles (at protein level).

The protein resides in the cytoplasm. Its subcellular location is the cytosol. It is found in the nucleus. The protein localises to the mitochondrion matrix. It localises to the mitochondrion outer membrane. In terms of biological role, transcriptional activator that recognizes and binds to the DNA sequence 5'-[AG]TAAA[TC]A-3' and regulates different processes, such as apoptosis and autophagy. Acts as a positive regulator of autophagy in skeletal muscle: in starved cells, enters the nucleus following dephosphorylation and binds the promoters of autophagy genes, such as GABARAP1L, MAP1LC3B and ATG12, thereby activating their expression, resulting in proteolysis of skeletal muscle proteins. Triggers apoptosis in the absence of survival factors, including neuronal cell death upon oxidative stress. Participates in post-transcriptional regulation of MYC: following phosphorylation by MAPKAPK5, promotes induction of miR-34b and miR-34c expression, 2 post-transcriptional regulators of MYC that bind to the 3'UTR of MYC transcript and prevent its translation. In response to metabolic stress, translocates into the mitochondria where it promotes mtDNA transcription. Also acts as a key regulator of chondrogenic commitment of skeletal progenitor cells in response to lipid availability: when lipids levels are low, translocates to the nucleus and promotes expression of SOX9, which induces chondrogenic commitment and suppresses fatty acid oxidation. Also acts as a key regulator of regulatory T-cells (Treg) differentiation by activating expression of FOXP3. This chain is Forkhead box protein O3, found in Mus musculus (Mouse).